The sequence spans 365 residues: MTDIPTLGVEEEFLLVHPGSGAPVALNREVAARAADMDVELQLELTSCQVETATAVVDDTAHLREQLLHLRRTASAAAEHAGARLLAVGLPPTLPHEFPVTDTPRYRDIGERYGMIAHEQGICGCHVHVAVPDRDAAIAVSNRLRPWLPLLLALTANSAIYRNADTGHASWRSVLWARWPSAGPPPHFDSADEYDAAVQMLSHTGVIRDDGMVYWDVRPSANFPTVEVRVADVPATVDETVLFAALVRGCVMTALEDERHGDPVLPLAPYALKAAYWKAARNGVDGDGVDLENHVPAPVSDLLGYLTERTRPALEAAGDHELVTAGLARVTDLGNGATRQRRAWRRNHDVDDVLAEAAAATLEDG.

It belongs to the glutamate--cysteine ligase type 2 family. YbdK subfamily.

The enzyme catalyses L-cysteine + L-glutamate + ATP = gamma-L-glutamyl-L-cysteine + ADP + phosphate + H(+). Its function is as follows. ATP-dependent carboxylate-amine ligase which exhibits weak glutamate--cysteine ligase activity. The sequence is that of Putative glutamate--cysteine ligase 2-2 from Mycolicibacterium vanbaalenii (strain DSM 7251 / JCM 13017 / BCRC 16820 / KCTC 9966 / NRRL B-24157 / PYR-1) (Mycobacterium vanbaalenii).